Reading from the N-terminus, the 118-residue chain is Large ribosomal subunit protein bL20c (118 aa).

Belongs to the bacterial ribosomal protein bL20 family.

It is found in the plastid. Its subcellular location is the chloroplast. In terms of biological role, binds directly to 23S ribosomal RNA and is necessary for the in vitro assembly process of the 50S ribosomal subunit. It is not involved in the protein synthesizing functions of that subunit. This is Large ribosomal subunit protein bL20c from Adiantum capillus-veneris (Maidenhair fern).